The sequence spans 1429 residues: Autophagy-related protein 11 (1429 aa).

Coiled-coil stretches lie at residues 540-579 (GDDD…QSQA), 616-808 (EGID…LDDH), 842-985 (TLVE…HMNS), and 1106-1135 (RRIK…LQKD). Residues 574–622 (HRQSQASRPGNLFQPQGSQQRERVNSASSVRSSRFDDRRRSSEGIDPLM) form a disordered region. The segment covering 575–592 (RQSQASRPGNLFQPQGSQ) has biased composition (polar residues). Positions 606-616 (SRFDDRRRSSE) are enriched in basic and acidic residues. Disordered stretches follow at residues 1205–1224 (SKSL…ENDN) and 1333–1405 (RAHN…PTRR). Composition is skewed to polar residues over residues 1206-1215 (KSLQPSSETE) and 1333-1362 (RAHN…GQKN). Positions 1384 to 1398 (KADEQPRSVVQREDS) are enriched in basic and acidic residues.

Belongs to the ATG11 family. As to quaternary structure, homodimer and potential homooligomers. Interacts with ATG1 kinase and the ATG19 and ATG34 cargo protein transporters. Interacts with ATG9, ATG17 and ATG20.

The protein resides in the preautophagosomal structure membrane. It localises to the vacuole membrane. Functionally, involved in cytoplasm to vacuole transport (Cvt), pexophagy, mitophagy and nucleophagy. Recruits mitochondria for their selective degradation via autophagy (mitophagy) during starvation, through its interaction with ATG32. Works as scaffold proteins that recruit ATG proteins to the pre-autophagosome (PAS), the site of vesicle/autophagosome formation. Required for ATG9 anterograde transport from the mitochondria to the PAS. Also recruits the ATG19-prAPE1 complex to the PAS. Required for the Cvt vesicles completion. Autophagy is required for proper vegetative growth, asexual/sexual reproduction, and full virulence. Autophagy is particularly involved in the biosynthesis of deoxynivalenol (DON), an important virulence determinant. This Gibberella zeae (strain ATCC MYA-4620 / CBS 123657 / FGSC 9075 / NRRL 31084 / PH-1) (Wheat head blight fungus) protein is Autophagy-related protein 11.